We begin with the raw amino-acid sequence, 107 residues long: EMBRYO SURROUNDING FACTOR 1-like protein 5 (107 aa).

Positions 1 to 22 (MSLLRFAILCIIFVSLFGVHEC) are cleaved as a signal peptide. 4 disulfide bridges follow: cysteine 35–cysteine 49, cysteine 40–cysteine 69, cysteine 47–cysteine 65, and cysteine 50–cysteine 58. A helical transmembrane segment spans residues 87–107 (GLGPPIYLFFLGQFIYFVLGL).

Belongs to the MEG family. As to expression, expressed in flowers.

Its subcellular location is the membrane. The chain is EMBRYO SURROUNDING FACTOR 1-like protein 5 (ESFL5) from Arabidopsis thaliana (Mouse-ear cress).